A 282-amino-acid chain; its full sequence is Undecaprenyl-diphosphatase (282 aa).

7 consecutive transmembrane segments (helical) span residues glycine 40–phenylalanine 60, alanine 85–phenylalanine 105, tyrosine 117–isoleucine 137, alanine 158–valine 178, alanine 193–leucine 213, isoleucine 231–phenylalanine 251, and alanine 258–glycine 278.

This sequence belongs to the UppP family.

The protein resides in the cell inner membrane. It catalyses the reaction di-trans,octa-cis-undecaprenyl diphosphate + H2O = di-trans,octa-cis-undecaprenyl phosphate + phosphate + H(+). Catalyzes the dephosphorylation of undecaprenyl diphosphate (UPP). Confers resistance to bacitracin. The chain is Undecaprenyl-diphosphatase from Prosthecochloris aestuarii (strain DSM 271 / SK 413).